A 298-amino-acid polypeptide reads, in one-letter code: Ethanolamine ammonia-lyase small subunit (298 aa).

3 residues coordinate adenosylcob(III)alamin: V210, E231, and C261.

It belongs to the EutC family. The basic unit is a heterodimer which dimerizes to form tetramers. The heterotetramers trimerize; 6 large subunits form a core ring with 6 small subunits projecting outwards. Adenosylcob(III)alamin is required as a cofactor.

It localises to the bacterial microcompartment. It catalyses the reaction ethanolamine = acetaldehyde + NH4(+). It functions in the pathway amine and polyamine degradation; ethanolamine degradation. In terms of biological role, catalyzes the deamination of various vicinal amino-alcohols to oxo compounds. Allows this organism to utilize ethanolamine as the sole source of nitrogen and carbon in the presence of external vitamin B12. The protein is Ethanolamine ammonia-lyase small subunit of Salmonella heidelberg (strain SL476).